The sequence spans 93 residues: Integration host factor subunit beta (93 aa).

Belongs to the bacterial histone-like protein family. In terms of assembly, heterodimer of an alpha and a beta chain.

Functionally, this protein is one of the two subunits of integration host factor, a specific DNA-binding protein that functions in genetic recombination as well as in transcriptional and translational control. The sequence is that of Integration host factor subunit beta from Aliivibrio fischeri (strain ATCC 700601 / ES114) (Vibrio fischeri).